The following is a 255-amino-acid chain: tRNA uridine(34) hydroxylase (255 aa).

The Rhodanese domain occupies A125–S219. Residue C179 is the Cysteine persulfide intermediate of the active site.

Belongs to the TrhO family.

It catalyses the reaction uridine(34) in tRNA + AH2 + O2 = 5-hydroxyuridine(34) in tRNA + A + H2O. In terms of biological role, catalyzes oxygen-dependent 5-hydroxyuridine (ho5U) modification at position 34 in tRNAs. This is tRNA uridine(34) hydroxylase from Nitrobacter hamburgensis (strain DSM 10229 / NCIMB 13809 / X14).